Consider the following 248-residue polypeptide: Triosephosphate isomerase (248 aa).

Substrate is bound by residues N10 and K12. Residue H95 is the Electrophile of the active site. E165 functions as the Proton acceptor in the catalytic mechanism.

Belongs to the triosephosphate isomerase family. Homodimer.

It carries out the reaction D-glyceraldehyde 3-phosphate = dihydroxyacetone phosphate. The protein operates within carbohydrate biosynthesis; gluconeogenesis. It participates in carbohydrate degradation; glycolysis; D-glyceraldehyde 3-phosphate from glycerone phosphate: step 1/1. This is Triosephosphate isomerase (TPI1) from Kluyveromyces lactis (strain ATCC 8585 / CBS 2359 / DSM 70799 / NBRC 1267 / NRRL Y-1140 / WM37) (Yeast).